Here is a 183-residue protein sequence, read N- to C-terminus: ARS-binding factor 2, mitochondrial (183 aa).

The transit peptide at 1-26 (MNSYSLLTRSFHESSKPLFNLASTLL) directs the protein to the mitochondrion. DNA-binding regions (HMG box) lie at residues 43 to 111 (PKRP…KEFD) and 116 to 183 (PKKP…YPLN).

It is found in the mitochondrion. The protein localises to the nucleus. Functionally, specific binding to the autonomously replicating sequence 1 (ARS1). Interaction with regulatory regions: probably involved in compacting the mitochondrial genome. It might play a positive role in gene expression and replication. This chain is ARS-binding factor 2, mitochondrial (ABF2), found in Saccharomyces cerevisiae (strain ATCC 204508 / S288c) (Baker's yeast).